Reading from the N-terminus, the 183-residue chain is MEDSSLLSPISLLTIVIFLFILNLMMIIQDFSSSFPFRFHLFFSNAYILFTSIRNNKQNTELPIIKKVVVPNRADIKTSVEEVKAIIDDSEALYECLIEEGEEYLLEKNEMMGKEIVKEAFRLFDENQDGFIDENELKHVLSLLGYDECTKMECRKMVKVYDENRDGKIDFYEFVKLIEKSFS.

EF-hand domains follow at residues 112–147 (MGKE…LGYD) and 149–183 (CTKM…KSFS). The Ca(2+) site is built by Asp125, Asn127, Asp129, Glu136, Asp162, Asn164, Asp166, Lys168, and Glu173.

Potential calcium sensor. This is Probable calcium-binding protein CML47 (CML47) from Arabidopsis thaliana (Mouse-ear cress).